Reading from the N-terminus, the 2837-residue chain is Bifunctional DNA-directed RNA polymerase subunit beta-beta' (2837 aa).

The tract at residues 1-1433 (MVDSSYMYAS…CLNVDLKQND (1433 aa)) is DNA-directed RNA polymerase subunit beta. A DNA-directed RNA polymerase subunit beta' region spans residues 1436-2837 (IEDISHTNIA…ESVVAYDQSN (1402 aa)). Positions 1501, 1503, 1516, and 1519 each coordinate Zn(2+). Aspartate 1893, aspartate 1895, and aspartate 1897 together coordinate Mg(2+). Residues cysteine 2235, cysteine 2309, cysteine 2316, and cysteine 2319 each contribute to the Zn(2+) site.

It in the N-terminal section; belongs to the RNA polymerase beta chain family. This sequence in the C-terminal section; belongs to the RNA polymerase beta' chain family. The RNAP catalytic core consists of 2 alpha, 1 beta/beta' and 1 omega subunit. When a sigma factor is associated with the core the holoenzyme is formed, which can initiate transcription. It depends on Mg(2+) as a cofactor. Zn(2+) is required as a cofactor.

The catalysed reaction is RNA(n) + a ribonucleoside 5'-triphosphate = RNA(n+1) + diphosphate. In terms of biological role, DNA-dependent RNA polymerase catalyzes the transcription of DNA into RNA using the four ribonucleoside triphosphates as substrates. In Wolbachia pipientis wMel, this protein is Bifunctional DNA-directed RNA polymerase subunit beta-beta' (rpoBC).